A 446-amino-acid polypeptide reads, in one-letter code: Glutamate-1-semialdehyde 2,1-aminomutase (446 aa).

Lys-264 carries the post-translational modification N6-(pyridoxal phosphate)lysine.

This sequence belongs to the class-III pyridoxal-phosphate-dependent aminotransferase family. HemL subfamily. Pyridoxal 5'-phosphate serves as cofactor.

Its subcellular location is the cytoplasm. It catalyses the reaction (S)-4-amino-5-oxopentanoate = 5-aminolevulinate. Its pathway is porphyrin-containing compound metabolism; protoporphyrin-IX biosynthesis; 5-aminolevulinate from L-glutamyl-tRNA(Glu): step 2/2. This Natronomonas pharaonis (strain ATCC 35678 / DSM 2160 / CIP 103997 / JCM 8858 / NBRC 14720 / NCIMB 2260 / Gabara) (Halobacterium pharaonis) protein is Glutamate-1-semialdehyde 2,1-aminomutase.